A 196-amino-acid chain; its full sequence is Corrinoid adenosyltransferase (196 aa).

An ATP-binding site is contributed by 36 to 42 (GNGKGKT).

It belongs to the Cob(I)alamin adenosyltransferase family.

It is found in the cytoplasm. The enzyme catalyses 2 cob(II)yrinate a,c diamide + reduced [electron-transfer flavoprotein] + 2 ATP = 2 adenosylcob(III)yrinate a,c-diamide + 2 triphosphate + oxidized [electron-transfer flavoprotein] + 3 H(+). The catalysed reaction is 2 cob(II)alamin + reduced [electron-transfer flavoprotein] + 2 ATP = 2 adenosylcob(III)alamin + 2 triphosphate + oxidized [electron-transfer flavoprotein] + 3 H(+). It participates in cofactor biosynthesis; adenosylcobalamin biosynthesis; adenosylcobalamin from cob(II)yrinate a,c-diamide: step 2/7. In terms of biological role, required for both de novo synthesis of the corrin ring for the assimilation of exogenous corrinoids. Participates in the adenosylation of a variety of incomplete and complete corrinoids. The sequence is that of Corrinoid adenosyltransferase (btuR) from Escherichia coli O6:H1 (strain CFT073 / ATCC 700928 / UPEC).